The following is a 2642-amino-acid chain: Fusarielin synthase FSL1 (2642 aa).

The Ketosynthase family 3 (KS3) domain occupies 6 to 450 (NEPIAIIGTG…GTNAHAILEA (445 aa)). Residues Cys-179, His-318, and His-370 each act as for beta-ketoacyl synthase activity in the active site. The interval 566-890 (VFTGQGAQWA…PYTSALVRGK (325 aa)) is malonyl-CoA:ACP transacylase (MAT) domain. The active-site For malonyltransferase activity is Ser-659. Positions 965–1101 (HDLLGIQTAD…GKVCIFLQTE (137 aa)) are N-terminal hotdog fold. Positions 965 to 1279 (HDLLGIQTAD…SFSPFAAATD (315 aa)) are dehydratase (DH) domain. The region spanning 965-1280 (HDLLGIQTAD…FSPFAAATDR (316 aa)) is the PKS/mFAS DH domain. The active-site Proton acceptor; for dehydratase activity is His-997. The tract at residues 1126–1280 (MAGIDVERFY…FSPFAAATDR (155 aa)) is C-terminal hotdog fold. The active-site Proton donor; for dehydratase activity is Asp-1189. Positions 1423-1622 (NYLDRYYTHA…GVDTNTPMPD (200 aa)) are methyltransferase (MET) domain. Residues 2244–2423 (TYWMLGLTGD…GHNAAVIDIS (180 aa)) are ketoreductase (KR) domain. In terms of domain architecture, Carrier spans 2556–2635 (QEVTSVLTSC…DLADYILESL (80 aa)). Ser-2595 carries the post-translational modification O-(pantetheine 4'-phosphoryl)serine.

Pantetheine 4'-phosphate serves as cofactor.

Its pathway is secondary metabolite biosynthesis. Reducing polyketide synthase; part of the gene cluster that mediates the biosynthesis of fusarielins F, G and H, decaketide compounds with 5 methylations and a decaline core that act as mycoestrogens as they stimulate growth of MCF-7 breast cancer cells. The initial compound in the pathway is produced by the reducing polyketide synthase FSL1. FSL1 lacks an active enoyl reductase (ER) domain and biosynthesis of fusarielins relies on the trans-acting enoyl reductase FSL5, before it is released through hydrolysis catalyzed by the thioesterase FSL2. Fusarielins F, G, and H have a C11=C12 cis double bond and is fully reduced between C10 and C11 and between C12 and C13. FSL3 can be involved in the formation of the C11=C12 cis double bond by moving a hypothetical C10=C11 or C12=C13 trans double bond to form prefusarielin. Prefusarielin is oxygenated at C15 and C16 by the cytochrome P450 monooxygenase FSL4, resulting in fusarielin F, which subsequently is epoxidized into fusarielin G by the same enzyme. The final step in the pathway is a reduction of the carboxylic acid moiety to yield fusarielin H via a still undetermined mechanism. This Gibberella zeae (strain ATCC MYA-4620 / CBS 123657 / FGSC 9075 / NRRL 31084 / PH-1) (Wheat head blight fungus) protein is Fusarielin synthase FSL1.